The sequence spans 473 residues: DNA (cytosine-5)-methyltransferase DRM1A (473 aa).

Residues 20–61 (SAPSALVAYFLGMGFSREMVFRAIKEIGDTDSEQILELLLTY) form the UBA 1 domain. Residues 84-101 (EEEDEEEDVNWDEDDTVD) show a composition bias toward acidic residues. The tract at residues 84 to 115 (EEEDEEEDVNWDEDDTVDNFDRATYSDGSGDE) is disordered. Residues 120-140 (EMSEKDEKIKSLVSMGFPEDE) enclose the UBA 2 domain. The 228-residue stretch at 204–431 (VHRNLPDQAL…DSVKTIMASI (228 aa)) folds into the SAM-dependent MTase DRM-type domain.

Belongs to the class I-like SAM-binding methyltransferase superfamily. DRM-methyltransferase family.

The protein resides in the nucleus. The enzyme catalyses a 2'-deoxycytidine in DNA + S-adenosyl-L-methionine = a 5-methyl-2'-deoxycytidine in DNA + S-adenosyl-L-homocysteine + H(+). Its function is as follows. Involved in de novo DNA methylation. Involved in RNA-directed DNA methylation (RdDM). The protein is DNA (cytosine-5)-methyltransferase DRM1A of Oryza sativa subsp. japonica (Rice).